Consider the following 82-residue polypeptide: Small ribosomal subunit protein bS16 (82 aa).

Belongs to the bacterial ribosomal protein bS16 family.

In Photorhabdus laumondii subsp. laumondii (strain DSM 15139 / CIP 105565 / TT01) (Photorhabdus luminescens subsp. laumondii), this protein is Small ribosomal subunit protein bS16.